We begin with the raw amino-acid sequence, 368 residues long: MLGIESSCDETGVGIVRGTTLLTNTVSSSMDEHVRFGGVIPEIASRAHLDAFVPTLQESLQEAGVTLEDIDAIAVTSGPGLAGALMVGVCAAKALAVATGKPLYAINHLVAHVGVGLLDGNRVSEGKHDAVAAAGLGAGKLPENLGALLVSGGHTEILRIRSITDDVELLGSTIDDAAGEAYDKVARILGLGYPGGPAIDKLAHQGNPKSIRFPRGLTQPKYMGTAEEKGPHRYDWSFSGLKTAVARCVEQFEARGEEVPVADIAAAFQEAVVDVISSKAVLACKEHGITDVLLGGGVAANSRLRELTGQRCASAGITLHVPPLGLCTDNGAMVAALGAQLIMAGISPSGVSFAPDSSMPVTTVSVPA.

Residues histidine 108 and histidine 112 each contribute to the Fe cation site. Residues 149-153 (LVSGG), aspartate 183, glycine 196, aspartate 200, and asparagine 301 contribute to the substrate site. Residue aspartate 329 coordinates Fe cation.

This sequence belongs to the KAE1 / TsaD family. It depends on Fe(2+) as a cofactor.

It localises to the cytoplasm. It catalyses the reaction L-threonylcarbamoyladenylate + adenosine(37) in tRNA = N(6)-L-threonylcarbamoyladenosine(37) in tRNA + AMP + H(+). In terms of biological role, required for the formation of a threonylcarbamoyl group on adenosine at position 37 (t(6)A37) in tRNAs that read codons beginning with adenine. Is involved in the transfer of the threonylcarbamoyl moiety of threonylcarbamoyl-AMP (TC-AMP) to the N6 group of A37, together with TsaE and TsaB. TsaD likely plays a direct catalytic role in this reaction. In Paenarthrobacter aurescens (strain TC1), this protein is tRNA N6-adenosine threonylcarbamoyltransferase.